We begin with the raw amino-acid sequence, 229 residues long: Orotidine 5'-phosphate decarboxylase (229 aa).

Substrate is bound by residues D10, K32, 59–68 (DLKFHDIPNT), T119, R180, Q189, G209, and R210. K61 (proton donor) is an active-site residue.

This sequence belongs to the OMP decarboxylase family. Type 1 subfamily. In terms of assembly, homodimer.

It catalyses the reaction orotidine 5'-phosphate + H(+) = UMP + CO2. The protein operates within pyrimidine metabolism; UMP biosynthesis via de novo pathway; UMP from orotate: step 2/2. In terms of biological role, catalyzes the decarboxylation of orotidine 5'-monophosphate (OMP) to uridine 5'-monophosphate (UMP). This chain is Orotidine 5'-phosphate decarboxylase, found in Legionella pneumophila subsp. pneumophila (strain Philadelphia 1 / ATCC 33152 / DSM 7513).